Reading from the N-terminus, the 182-residue chain is Large ribosomal subunit protein bL25 (182 aa).

The protein belongs to the bacterial ribosomal protein bL25 family. CTC subfamily. In terms of assembly, part of the 50S ribosomal subunit; part of the 5S rRNA/L5/L18/L25 subcomplex. Contacts the 5S rRNA. Binds to the 5S rRNA independently of L5 and L18.

In terms of biological role, this is one of the proteins that binds to the 5S RNA in the ribosome where it forms part of the central protuberance. This Borrelia duttonii (strain Ly) protein is Large ribosomal subunit protein bL25.